A 249-amino-acid polypeptide reads, in one-letter code: Eukaryotic translation initiation factor 3 subunit J-A (249 aa).

Residues 1–15 (MADADSWDADSFEPE) show a composition bias toward acidic residues. A disordered region spans residues 1–104 (MADADSWDAD…DTPLTPEDEL (104 aa)). Over residues 16 to 27 (EPIKKAAVHDKW) the composition is skewed to basic and acidic residues. Positions 28–52 (EGEDEDDDVKDNWDDDEEEEKEEEE) are enriched in acidic residues. Positions 34 to 96 (DDVKDNWDDD…QQLEETKRDT (63 aa)) form a coiled coil. The segment covering 53–96 (EKKTEAKPTEKKKLSEKIKEKENLQRKKQEELRKQQLEETKRDT) has biased composition (basic and acidic residues).

This sequence belongs to the eIF-3 subunit J family. In terms of assembly, component of the eukaryotic translation initiation factor 3 (eIF-3) complex, which is composed of 13 subunits: eif3a, eif3b, eif3c, eif3d, eif3e, eif3f, eif3g, eif3h, eif3i, eif3j, eif3k, eif3l and eif3m.

Its subcellular location is the cytoplasm. In terms of biological role, component of the eukaryotic translation initiation factor 3 (eIF-3) complex, which is involved in protein synthesis of a specialized repertoire of mRNAs and, together with other initiation factors, stimulates binding of mRNA and methionyl-tRNAi to the 40S ribosome. The eIF-3 complex specifically targets and initiates translation of a subset of mRNAs involved in cell proliferation. In Danio rerio (Zebrafish), this protein is Eukaryotic translation initiation factor 3 subunit J-A (eif3ja).